The following is a 320-amino-acid chain: Malate dehydrogenase (320 aa).

Residues 10 to 15 (GAGQIG) and D34 contribute to the NAD(+) site. 2 residues coordinate substrate: R83 and R89. NAD(+)-binding positions include N96 and 119 to 121 (ITN). 2 residues coordinate substrate: N121 and R152. The active-site Proton acceptor is H176.

It belongs to the LDH/MDH superfamily. MDH type 3 family.

The catalysed reaction is (S)-malate + NAD(+) = oxaloacetate + NADH + H(+). Functionally, catalyzes the reversible oxidation of malate to oxaloacetate. The protein is Malate dehydrogenase of Cereibacter sphaeroides (strain ATCC 17025 / ATH 2.4.3) (Rhodobacter sphaeroides).